Consider the following 872-residue polypeptide: Alanine--tRNA ligase (872 aa).

Positions 567, 571, 669, and 673 each coordinate Zn(2+).

It belongs to the class-II aminoacyl-tRNA synthetase family. It depends on Zn(2+) as a cofactor.

It is found in the cytoplasm. It carries out the reaction tRNA(Ala) + L-alanine + ATP = L-alanyl-tRNA(Ala) + AMP + diphosphate. Functionally, catalyzes the attachment of alanine to tRNA(Ala) in a two-step reaction: alanine is first activated by ATP to form Ala-AMP and then transferred to the acceptor end of tRNA(Ala). Also edits incorrectly charged Ser-tRNA(Ala) and Gly-tRNA(Ala) via its editing domain. The sequence is that of Alanine--tRNA ligase from Streptococcus thermophilus (strain CNRZ 1066).